The primary structure comprises 453 residues: Nuclear and cytoplasmic polyadenylated RNA-binding protein PUB1 (453 aa).

The interval 1-67 is disordered; sequence MSENNEEQHQ…PSVVPANAIT (67 aa). Ser-2 carries the N-acetylserine modification. RRM domains lie at 75–152 and 162–240; these read RVLY…WAFQ and FNLF…WAAK. Positions 241 to 262 are disordered; the sequence is RDNNNNNNYQQRRNYGNNNRGG. Residues 244-262 are compositionally biased toward low complexity; that stretch reads NNNNNYQQRRNYGNNNRGG. An Omega-N-methylarginine modification is found at Arg-260. The segment at 260 to 264 is RNA-binding RGG-box; the sequence is RGGFR. The 73-residue stretch at 341–413 folds into the RRM 3 domain; sequence TTAYIGNIPH…RNLRTGWGKE (73 aa). A disordered region spans residues 419–453; it reads PQQQQQGGQPLIMNDQQQPVMSEQQQQQQQQQQQQ. The segment covering 434-453 has biased composition (low complexity); sequence QQQPVMSEQQQQQQQQQQQQ.

Interacts with NAB2.

It is found in the cytoplasm. Its subcellular location is the nucleus. It localises to the P-body. The protein localises to the stress granule. In terms of biological role, may be associated with hnRNA within the nucleus and remains associated during nucleocytoplasmic mRNA transport, once the proteins are in the cytoplasm, disassembly of PUB1-RNA complexes may occur prior to PAB1 binding and formation of a translationally competent RNP complex. Binds to polyadenylated RNA; prefers to bind poly(rU); binds to T-rich single-stranded DNA. The chain is Nuclear and cytoplasmic polyadenylated RNA-binding protein PUB1 from Saccharomyces cerevisiae (strain ATCC 204508 / S288c) (Baker's yeast).